Reading from the N-terminus, the 943-residue chain is Nuclear factor of activated T-cells, cytoplasmic 1 (943 aa).

Residues 22–48 (GRGETLGPAPRAGGTMKSAEEEHYGYA) form a disordered region. Positions 118–123 (PRIEIT) are calcineurin-binding. Positions 126–218 (LGLYHNNNQF…CVSPKTTDPE (93 aa)) are transactivation domain A (TAD-A). Positions 200 to 298 (PQTSPWQSPC…GSPRVSVTDD (99 aa)) are disordered. The span at 201-214 (QTSPWQSPCVSPKT) shows a compositional bias: polar residues. 2 repeat units span residues 203–219 (SPWQ…DPEE) and 233–249 (SPRH…VTEE). The tract at residues 203–298 (SPWQSPCVSP…GSPRVSVTDD (96 aa)) is 3 X SP repeats. 2 positions are modified to phosphoserine: serine 233 and serine 237. Residues 236 to 248 (HSPSTSPRASVTE) are compositionally biased toward polar residues. At serine 245 the chain carries Phosphoserine; by PKA. Positions 265 to 267 (KRK) match the Nuclear localization signal motif. Serine 269 bears the Phosphoserine; by PKA mark. A compositionally biased stretch (pro residues) spans 276–288 (PYSPHHSPTPSPH). Residues 282 to 298 (SPTPSPHGSPRVSVTDD) form repeat 3. A Phosphoserine; by PKA modification is found at serine 294. Positions 310-321 (SAIVAAINALTT) match the Nuclear export signal motif. The 183-residue stretch at 410-592 (PTLPALDWQL…NPIECSQRSA (183 aa)) folds into the RHD domain. The DNA-binding element occupies 439–446 (RAHYETEG). A Nuclear localization signal motif is present at residues 682–684 (KRK). The interval 703–943 (TEPTDDYEPA…NDLSSTSTHS (241 aa)) is transactivation domain B (TAD-B). The tract at residues 787–912 (HLGLPQPAGE…SPNLAPIPVT (126 aa)) is disordered. A compositionally biased stretch (pro residues) spans 846–855 (SPSPPLPPAT). Residues 924-933 (YLDDVNEIIR) carry the Nuclear export signal motif.

Member of the multicomponent NFATC transcription complex that consists of at least two components, a pre-existing cytoplasmic component NFATC2 and an inducible nuclear component NFATC1. Other members such as NFATC4, NFATC3 or members of the activating protein-1 family, MAF, GATA4 and Cbp/p300 can also bind the complex. NFATC proteins bind to DNA as monomers. Interacts with HOMER2 and HOMER3; this interaction may compete with calcineurin/PPP3CA-binding and hence prevent NFATC1 dephosphorylation and activation. Interacts with TLE6/GRG6. Post-translationally, phosphorylated by NFATC-kinase and GSK3B; phosphorylation induces NFATC1 nuclear exit and dephosphorylation by calcineurin promotes nuclear import. Phosphorylation by PKA and DYRK2 negatively modulates nuclear accumulation, and promotes subsequent phosphorylation by GSK3B or casein kinase 1. As to expression, expressed in thymus, peripheral leukocytes as T-cells and spleen. Isoforms A are preferentially expressed in effector T-cells (thymus and peripheral leukocytes) whereas isoforms B and isoforms C are preferentially expressed in naive T-cells (spleen). Isoforms B are expressed in naive T-cells after first antigen exposure and isoforms A are expressed in effector T-cells after second antigen exposure. Isoforms IA are widely expressed but not detected in liver nor pancreas, neural expression is strongest in corpus callosum. Isoforms IB are expressed mostly in muscle, cerebellum, placenta and thymus, neural expression in fetal and adult brain, strongest in corpus callosum.

The protein localises to the cytoplasm. It localises to the nucleus. Its function is as follows. Plays a role in the inducible expression of cytokine genes in T-cells, especially in the induction of the IL-2 or IL-4 gene transcription. Also controls gene expression in embryonic cardiac cells. Could regulate not only the activation and proliferation but also the differentiation and programmed death of T-lymphocytes as well as lymphoid and non-lymphoid cells. Required for osteoclastogenesis and regulates many genes important for osteoclast differentiation and function. The chain is Nuclear factor of activated T-cells, cytoplasmic 1 (NFATC1) from Homo sapiens (Human).